A 326-amino-acid chain; its full sequence is GRIGRLVARVALQRDDVELVAVNDPFISTDYMTYMFKYDSVHGQWKHHELKVKDEKTLLFGEKSVRVFGIRNPEEIPWAEAGADFVVESTGVFTDKDKAAAHLKGGAKKVVISAPSKDAPMFVVGVNEKEYKPEYDIVSNASCTTNCLAPLAKVINDRFGIVEGLMTTVHSLTATQKTVDGPSMKDWRGGRATSFNIIPSSTGAAKAVGKVLPALNGKLTGMAFRVPTVDVSVVDLTVRLEKEASYDDIKAAIKEESEGKLKGILGFTEDDVVSTDFVGDSRSSIFDAKAGIALSKNFVKLVSWYDNEWGYSSRVIDLICHMASVA.

NAD(+) contacts are provided by residues 2 to 3 (RI), Asp-24, and Arg-71. D-glyceraldehyde 3-phosphate-binding positions include 142–144 (SCT), Thr-173, 202–203 (TG), and Arg-225. Cys-143 serves as the catalytic Nucleophile. Asn-307 lines the NAD(+) pocket.

It belongs to the glyceraldehyde-3-phosphate dehydrogenase family.

It is found in the cytoplasm. It catalyses the reaction D-glyceraldehyde 3-phosphate + phosphate + NAD(+) = (2R)-3-phospho-glyceroyl phosphate + NADH + H(+). Its pathway is carbohydrate degradation; glycolysis; pyruvate from D-glyceraldehyde 3-phosphate: step 1/5. Key enzyme in glycolysis that catalyzes the first step of the pathway by converting D-glyceraldehyde 3-phosphate (G3P) into 3-phospho-D-glyceroyl phosphate. Essential for the maintenance of cellular ATP levels and carbohydrate metabolism. The protein is Glyceraldehyde-3-phosphate dehydrogenase, cytosolic (GAPC) of Nicotiana tabacum (Common tobacco).